The primary structure comprises 318 residues: Homeobox protein Nkx-2.5 (318 aa).

Positions 137-196 form a DNA-binding region, homeobox; the sequence is RRKPRVLFSQAQVYELERRFKQQRYLSPAERDQLASVLKLTSTQVKIWFQNRRYKCKRQR.

Belongs to the NK-2 homeobox family. In terms of assembly, homodimer (via the homeobox); binds DNA as homodimer. Interacts (via the homeobox) with TBX5 (via the T-box); this complex binds DNA. Interacts with HIPK1 and HIPK2, but not HIPK3. Interacts with the C-terminal zinc finger of GATA4 through its homeobox domain. Also interacts with JARID2 which represses its ability to activate transcription of ANF. Interacts with FBLIM1. Interacts with TBX18. Interacts with histone methyltransferase NSD2 (via HMG box). Interacts with NEDD9. Interacts with TBX1.

The protein resides in the nucleus. Functionally, transcription factor required for the development of the heart and the spleen. During heart development, acts as a transcriptional activator of NPPA/ANF in cooperation with GATA4. May cooperate with TBX2 to negatively modulate expression of NPPA/ANF in the atrioventricular canal. Binds to the core DNA motif of NPPA promoter. Together with PBX1, required for spleen development through a mechanism that involves CDKN2B repression. Positively regulates transcription of genes such as COL3A1 and MMP2, resulting in increased pulmonary endothelial fibrosis in response to hypoxia. The chain is Homeobox protein Nkx-2.5 (Nkx2-5) from Rattus norvegicus (Rat).